A 159-amino-acid chain; its full sequence is 2-C-methyl-D-erythritol 2,4-cyclodiphosphate synthase (159 aa).

D11 and H13 together coordinate a divalent metal cation. Residues 11–13 (DVH) and 37–38 (HS) each bind 4-CDP-2-C-methyl-D-erythritol 2-phosphate. An a divalent metal cation-binding site is contributed by H45. Residues 59-61 (DIG) and 64-68 (FPDSD) each bind 4-CDP-2-C-methyl-D-erythritol 2-phosphate.

The protein belongs to the IspF family. As to quaternary structure, homotrimer. The cofactor is a divalent metal cation.

The catalysed reaction is 4-CDP-2-C-methyl-D-erythritol 2-phosphate = 2-C-methyl-D-erythritol 2,4-cyclic diphosphate + CMP. It functions in the pathway isoprenoid biosynthesis; isopentenyl diphosphate biosynthesis via DXP pathway; isopentenyl diphosphate from 1-deoxy-D-xylulose 5-phosphate: step 4/6. Its function is as follows. Involved in the biosynthesis of isopentenyl diphosphate (IPP) and dimethylallyl diphosphate (DMAPP), two major building blocks of isoprenoid compounds. Catalyzes the conversion of 4-diphosphocytidyl-2-C-methyl-D-erythritol 2-phosphate (CDP-ME2P) to 2-C-methyl-D-erythritol 2,4-cyclodiphosphate (ME-CPP) with a corresponding release of cytidine 5-monophosphate (CMP). In Solibacter usitatus (strain Ellin6076), this protein is 2-C-methyl-D-erythritol 2,4-cyclodiphosphate synthase.